A 193-amino-acid chain; its full sequence is 21 kDa protein (193 aa).

Residues 1–22 (MKLSKSTLVFSALLVILAAASA) form the signal peptide.

This Daucus carota (Wild carrot) protein is 21 kDa protein.